The chain runs to 382 residues: MSGVSALFLPPASTAGADGELAVWWVQDGECRRAPFAQALAEIRAPWRLYLPVEAVTACAVNLPTQKARWLRQSLPFAVEEQLADDVEQMHLALGPALADGRHRVFAVQRTWLAAWLALAEGAGKAPASLHVDADCLPGEGSCLFWLEERWLLGGSGAVRLACGSEDWPVLRDSCPPPQRAFAAQEVAPLEGVEVQALAGNPHVWLSEQPLGTDLAQAEFAARQQSSQWRRWRPLLGLVGLWLVLQWGFTLVQAWQLQREGDRYAAQSAELYRQLFPEDRKLINLRAQFDQHLADSASSGGEGQLLGLLGQAATVIGGEPTVSVEQLDFSAARGDVALQVRAPGFDVLERLRSRLSESGLAVQLGSASRDGSTVSARLVIGG.

Over 1 to 233 (MSGVSALFLP…QQSSQWRRWR (233 aa)) the chain is Cytoplasmic. Residues 234 to 254 (PLLGLVGLWLVLQWGFTLVQA) form a helical membrane-spanning segment. Residues 255 to 382 (WQLQREGDRY…TVSARLVIGG (128 aa)) are Periplasmic-facing.

Belongs to the GSP L family. Type II secretion system is composed of four main components: the outer membrane complex, the inner membrane complex, the cytoplasmic secretion ATPase and the periplasm-spanning pseudopilus. Forms homodimers. Interacts with XcpZ/GspM. Interacts with XcpR/GspE and XcpS/GspF.

It localises to the cell inner membrane. Its function is as follows. Inner membrane component of the type II secretion system required for the energy-dependent secretion of extracellular factors such as proteases and toxins from the periplasm. Plays a role in the complex assembly and recruits XcpZ resulting in a stable complex in the inner membrane. Provides thus a link between the energy-providing XcpR protein in the cytoplasm and the rest of the T2SS machinery. The chain is Type II secretion system protein L (xcpY) from Pseudomonas aeruginosa (strain ATCC 15692 / DSM 22644 / CIP 104116 / JCM 14847 / LMG 12228 / 1C / PRS 101 / PAO1).